Consider the following 543-residue polypeptide: Aluminum-activated malate transporter 14 (543 aa).

The next 6 helical transmembrane spans lie at 56 to 76, 80 to 100, 106 to 126, 129 to 149, 164 to 184, and 191 to 211; these read VGVS…FKGI, AIWA…ATLC, GLGT…ANDS, IFRA…ITYL, LIFL…DTVI, and FYTI…VFPI. The segment at 416–438 is disordered; it reads DTNEAASYQNTGTPRGERMSRFG. Polar residues predominate over residues 419–428; that stretch reads EAASYQNTGT. A coiled-coil region spans residues 445–472; sequence RLRADTLERRSAAATNERKILRQQLSRI.

Belongs to the aromatic acid exporter (TC 2.A.85) family.

The protein localises to the membrane. Its function is as follows. Malate transporter. The polypeptide is Aluminum-activated malate transporter 14 (ALMT14) (Arabidopsis thaliana (Mouse-ear cress)).